Here is a 285-residue protein sequence, read N- to C-terminus: MEFTMNIAANHNLENKLIIITGAGGVLCSFLAKQLAYTKANIALLDLNFEAADKVAKEINQSGGKAKAYKTNVLELENIKEVRNQIETDFGTCDILINGAGGNNPKATTDNEFHQFDLNETTRTFFDLDKSGIEFVFNLNYLGSLLPTQVFAKDMLGKQGANIINISSMNAFTPLTKIPAYSGAKAAISNFTQWLAVYFSKVGIRCNAIAPGFLVSNQNLALLFDTEGKPTDRANKILTNTPMGRFGESEELLGALLFLIDENYSAFVNGVVLPVDGGFSAYSGV.

S168 contacts substrate. Y181 functions as the Proton acceptor in the catalytic mechanism.

This sequence belongs to the short-chain dehydrogenases/reductases (SDR) family.

This is an uncharacterized protein from Haemophilus influenzae (strain ATCC 51907 / DSM 11121 / KW20 / Rd).